Here is a 192-residue protein sequence, read N- to C-terminus: Cytidylate kinase (192 aa).

7-15 (GPPGSGKST) is an ATP binding site.

The protein belongs to the cytidylate kinase family. Type 2 subfamily.

It is found in the cytoplasm. It carries out the reaction CMP + ATP = CDP + ADP. The catalysed reaction is dCMP + ATP = dCDP + ADP. The sequence is that of Cytidylate kinase from Halorubrum lacusprofundi (strain ATCC 49239 / DSM 5036 / JCM 8891 / ACAM 34).